Reading from the N-terminus, the 384-residue chain is Somatostatin receptor type 4 (384 aa).

The disordered stretch occupies residues 1–34 (MNTPATLPLGGEDTTWTPGINASWAPDEEEDAVR). Residues 1–41 (MNTPATLPLGGEDTTWTPGINASWAPDEEEDAVRSDGTGTA) lie on the Extracellular side of the membrane. Asparagine 21 is a glycosylation site (N-linked (GlcNAc...) asparagine). The helical transmembrane segment at 42 to 69 (GMVTIQCIYALVCLVGLVGNALVIFVIL) threads the bilayer. Residues 70-79 (RYAKMKTATN) are Cytoplasmic-facing. A helical transmembrane segment spans residues 80–105 (IYLLNLAVADELFMLSVPFVASAAAL). The Extracellular portion of the chain corresponds to 106 to 116 (RHWPFGAVLCR). Cysteine 115 and cysteine 194 are joined by a disulfide. A helical membrane pass occupies residues 117-138 (AVLSVDGLNMFTSVFCLTVLSV). Over 139–160 (DRYVAVVHPLRAATYRRPSVAK) the chain is Cytoplasmic. Residues 161–181 (LINLGVWLASLLVTLPIAVFA) form a helical membrane-spanning segment. Over 182–203 (DTRPARGGEAVACNLHWPHPAW) the chain is Extracellular. The chain crosses the membrane as a helical span at residues 204 to 228 (SAVFVIYTFLLGFLLPVLAIGLCYL). Residues 229–254 (LIVGKMRAVALRAGWQQRRRSEKKIT) are Cytoplasmic-facing. A helical transmembrane segment spans residues 255–280 (RLVLMVVTVFVLCWMPFYVVQLLNLF). At 281 to 287 (VTSLDAT) the chain is on the extracellular side. A helical membrane pass occupies residues 288–311 (VNHVSLILSYANSCANPILYGFLS). The Cytoplasmic segment spans residues 312-384 (DNFRRSFQRV…RVPFTKTTTF (73 aa)). Cysteine 323 carries S-palmitoyl cysteine lipidation.

This sequence belongs to the G-protein coupled receptor 1 family. As to expression, brain, lung, heart and islets. Moderate levels in the hippocampus, cortex and olfactory bulb.

It is found in the cell membrane. Receptor for somatostatin-14. The activity of this receptor is mediated by G proteins which inhibits adenylyl cyclase. It is functionally coupled not only to inhibition of adenylate cyclase, but also to activation of both arachidonate release and mitogen-activated protein (MAP) kinase cascade. This chain is Somatostatin receptor type 4 (Sstr4), found in Rattus norvegicus (Rat).